Here is a 186-residue protein sequence, read N- to C-terminus: Mating-type-like protein ALPHA2 (186 aa).

The homeobox; TALE-type DNA-binding region spans 112 to 174 (KKIKSRRLTK…NRRRKEKNTK (63 aa)).

This sequence belongs to the TALE/M-ATYP homeobox family. As to quaternary structure, forms a heterodimer with A1.

Its subcellular location is the nucleus. Mating type proteins are sequence specific DNA-binding proteins that act as master switches in yeast differentiation by controlling gene expression in a cell type-specific fashion. Transcriptional corepressor that acts in conjunction with A1 to repress transcription both of homozygote-specific genes and of genes necessary for the white-opaque switch, a prerequisite for mating. In Candida albicans (strain SC5314 / ATCC MYA-2876) (Yeast), this protein is Mating-type-like protein ALPHA2 (MTLALPHA2).